The following is a 172-amino-acid chain: MNSPAIVIIIFSTLTFSEAWVNDWDGALNFQCQLKDSIKTISSIHSNHHEDRRWNFGCERTLRDPSCYFTNYVNDWDKLLHFTCKSGEAIAGFNSYHDNRREDRRWKIYCCKDKNKCTDYRTCAWTGYVNSWDGDLHYTVPKDYVLTGVISEHDNHREDRRWKFQHCRLKNC.

Residues 1 to 19 (MNSPAIVIIIFSTLTFSEA) form the signal peptide. Tandem repeats lie at residues 21–25 (VNDWD), 50–54 (EDRRW), 73–77 (VNDWD), and 102–106 (EDRRW). 5 cysteine pairs are disulfide-bonded: cysteine 32/cysteine 58, cysteine 67/cysteine 172, cysteine 84/cysteine 110, cysteine 111/cysteine 117, and cysteine 123/cysteine 167. 2 consecutive repeat copies span residues 129–133 (VNSWD) and 158–162 (EDRRW).

It belongs to the dermatopontin family.

The protein localises to the secreted. Possesses the property of inducing both aggregation of amebocytes and agglutination of erythrocytes. This is Hemagglutinin/amebocyte aggregation factor from Limulus polyphemus (Atlantic horseshoe crab).